Consider the following 544-residue polypeptide: Glucans biosynthesis protein G (544 aa).

Residues 1 to 34 (MVSLLRCQSSKPYSSLICSLALGVAFALSGTAYA) form the signal peptide.

The protein belongs to the OpgD/OpgG family.

It is found in the periplasm. The protein operates within glycan metabolism; osmoregulated periplasmic glucan (OPG) biosynthesis. Functionally, involved in the biosynthesis of osmoregulated periplasmic glucans (OPGs). The polypeptide is Glucans biosynthesis protein G (Shewanella putrefaciens (strain CN-32 / ATCC BAA-453)).